The chain runs to 268 residues: Orotidine 5'-phosphate decarboxylase (268 aa).

Substrate contacts are provided by residues Asp39, 61-63 (KTH), 93-102 (DRKFADIGNT), Tyr219, and Arg237. The active-site Proton donor is the Lys95.

The protein belongs to the OMP decarboxylase family.

The enzyme catalyses orotidine 5'-phosphate + H(+) = UMP + CO2. The protein operates within pyrimidine metabolism; UMP biosynthesis via de novo pathway; UMP from orotate: step 2/2. This Pachysolen tannophilus (Yeast) protein is Orotidine 5'-phosphate decarboxylase (URA3).